Consider the following 453-residue polypeptide: MGVLGRVLLWLQLCALTQAVSKLWVPNTDFDVAANWSQNRTPCAGGAVEFPADKMVSVLVQEGHAVSDMLLPLDGELVLASGAGFGVSDVGSHLDCGAGEPAVFRDSDRFSWHDPHLWRSGDEAPGLFFVDAERVPCRHDDVFFPPSASFRVGLGPGASPVRVRSISALGRTFTRDEDLAVFLASRAGRLRFHGPGALSVGPEDCADPSGCVCGNAEAQPWICAALLQPLGGRCPQAACHSALRPQGQCCDLCGAVVLLTHGPAFDLERYRARILDTFLGLPQYHGLQVAVSKVPRSSRLREADTEIQVVLVENGPETGGAGRLARALLADVAENGEALGVLEATMRESGAHVWGSSAAGLAGGVAAAVLLALLVLLVAPPLLRRAGRLRWRRHEAAAPAGAPLGFRNPVFDVTASEELPLPRRLSLVPKAAADSTSHSYFVNPLFAGAEAEA.

Residues 1-19 (MGVLGRVLLWLQLCALTQA) form the signal peptide. Topologically, residues 20 to 357 (VSKLWVPNTD…ESGAHVWGSS (338 aa)) are extracellular. Residue Asn35 is glycosylated (N-linked (GlcNAc...) asparagine). 6 disulfides stabilise this stretch: Cys43-Cys96, Cys137-Cys213, Cys205-Cys211, Cys223-Cys249, Cys234-Cys250, and Cys239-Cys253. The interaction with CUBN stretch occupies residues 67–87 (SDMLLPLDGELVLASGAGFGV). One can recognise a VWFC domain in the interval 202-254 (PEDCADPSGCVCGNAEAQPWICAALLQPLGGRCPQAACHSALRPQGQCCDLCG). Residues 358–378 (AAGLAGGVAAAVLLALLVLLV) form a helical membrane-spanning segment. Topologically, residues 379-453 (APPLLRRAGR…PLFAGAEAEA (75 aa)) are cytoplasmic.

In terms of assembly, interacts (via extracellular region) with CUBN/cubilin, giving rise to a huge complex containing one AMN chain and three CUBN chains. Post-translationally, N-glycosylated. In terms of processing, a soluble form arises by proteolytic removal of the membrane anchor. Detected in proximal tubules in the kidney cortex (at protein level). Long isoforms are highly expressed in small intestine, colon and kidney (renal proximal tubule epithelial cells). Shorter isoforms are detected at lower levels in testis, thymus and peripheral blood leukocytes.

The protein localises to the apical cell membrane. It is found in the cell membrane. The protein resides in the endosome membrane. Its subcellular location is the membrane. It localises to the coated pit. The protein localises to the secreted. Its function is as follows. Membrane-bound component of the endocytic receptor formed by AMN and CUBN. Required for normal CUBN glycosylation and trafficking to the cell surface. The complex formed by AMN and CUBN is required for efficient absorption of vitamin B12. Required for normal CUBN-mediated protein transport in the kidney. The protein is Protein amnionless (AMN) of Homo sapiens (Human).